The sequence spans 419 residues: DNA ligase (419 aa).

An NTD region spans residues 1 to 120; the sequence is MLNHFPGHCS…ARQKRGAHTN (120 aa). The tract at residues 121 to 317 is AD domain; that stretch reads RGMIPPMLVK…NYHSAHLAKL (197 aa). Lys151 functions as the N6-AMP-lysine intermediate in the catalytic mechanism. 3 residues coordinate ATP: Lys151, Glu203, and Phe232. Glu203 is a binding site for a divalent metal cation. Glu291 provides a ligand contact to a divalent metal cation. ATP is bound by residues Ile294 and Lys316. An OB domain region spans residues 318-419; the sequence is KPLLDAEFIL…REPINVLEII (102 aa).

It belongs to the ATP-dependent DNA ligase family.

Its subcellular location is the virion. The catalysed reaction is ATP + (deoxyribonucleotide)n-3'-hydroxyl + 5'-phospho-(deoxyribonucleotide)m = (deoxyribonucleotide)n+m + AMP + diphosphate.. Very low-fidelity DNA ligase that seals nicks in double-stranded DNA during DNA repair. Together with the viral repair DNA polymerase X, fills the single nucleotide gaps generated by the AP endonuclease. It is not essential for viral replication and recombination. Displays a very low adenylation activity towards DNA with 3'-dideoxy- or 3'-amino-terminated nicks compared to regular nick DNA. The chain is DNA ligase from African swine fever virus (isolate Tick/South Africa/Pretoriuskop Pr4/1996) (ASFV).